The following is a 78-amino-acid chain: Large ribosomal subunit protein bL28 (78 aa).

This sequence belongs to the bacterial ribosomal protein bL28 family.

The polypeptide is Large ribosomal subunit protein bL28 (Proteus mirabilis (strain HI4320)).